We begin with the raw amino-acid sequence, 345 residues long: Transcription factor 19 (345 aa).

Positions 31 to 88 (YRLGHRADLCDVALRPQQEPGLISGIHAELHAEPRGDDWRVSLEDHSLQGTLVNNVRL) constitute an FHA domain. Disordered regions lie at residues 138 to 167 (RSRG…STLS) and 190 to 277 (LTFS…KYPV). The segment at 293-342 (AAPCCCLPQEETVAWVQCDGCDVWFHVACVGCSIQAAREADFRCPGCRAG) adopts a PHD-type zinc-finger fold. Zn(2+) contacts are provided by cysteine 296, cysteine 298, cysteine 310, cysteine 313, histidine 318, cysteine 321, cysteine 336, and cysteine 339.

It is found in the nucleus. Potential transcription factor that may play a role in the regulation of genes involved in cell cycle G1/S transition. May bind to regulatory elements of genes, including the promoter of the transcription factor FOXO1. The chain is Transcription factor 19 (TCF19) from Macaca mulatta (Rhesus macaque).